We begin with the raw amino-acid sequence, 305 residues long: Cysteine synthase (305 aa).

Lys45 carries the N6-(pyridoxal phosphate)lysine modification. Pyridoxal 5'-phosphate contacts are provided by residues Asn75, 179-183 (GSGGT), and Ser266.

This sequence belongs to the cysteine synthase/cystathionine beta-synthase family. Homodimer. It depends on pyridoxal 5'-phosphate as a cofactor.

It carries out the reaction O-acetyl-L-serine + hydrogen sulfide = L-cysteine + acetate. Its pathway is amino-acid biosynthesis; L-cysteine biosynthesis; L-cysteine from L-serine: step 2/2. This Helicobacter pylori (strain J99 / ATCC 700824) (Campylobacter pylori J99) protein is Cysteine synthase (cysM).